The primary structure comprises 155 residues: MASKGTKLIATNKKARHDYFIEETFETGIVLVGTEVKSIRQGKLNIKDGYARVENSEVFLYNVHISPYEQGNIFNKDPLRVRKLLLHKSEIRKLIGYVQQKGYTLIPLSFYLKDGLIKVELGIGVGKKIYDKRQDIAKKDAARRIDKELRQREKQ.

This sequence belongs to the SmpB family.

The protein localises to the cytoplasm. In terms of biological role, required for rescue of stalled ribosomes mediated by trans-translation. Binds to transfer-messenger RNA (tmRNA), required for stable association of tmRNA with ribosomes. tmRNA and SmpB together mimic tRNA shape, replacing the anticodon stem-loop with SmpB. tmRNA is encoded by the ssrA gene; the 2 termini fold to resemble tRNA(Ala) and it encodes a 'tag peptide', a short internal open reading frame. During trans-translation Ala-aminoacylated tmRNA acts like a tRNA, entering the A-site of stalled ribosomes, displacing the stalled mRNA. The ribosome then switches to translate the ORF on the tmRNA; the nascent peptide is terminated with the 'tag peptide' encoded by the tmRNA and targeted for degradation. The ribosome is freed to recommence translation, which seems to be the essential function of trans-translation. This chain is SsrA-binding protein, found in Alkaliphilus oremlandii (strain OhILAs) (Clostridium oremlandii (strain OhILAs)).